Here is a 69-residue protein sequence, read N- to C-terminus: UPF0248 protein AF_0420 (69 aa).

The protein belongs to the UPF0248 family.

This is UPF0248 protein AF_0420 from Archaeoglobus fulgidus (strain ATCC 49558 / DSM 4304 / JCM 9628 / NBRC 100126 / VC-16).